The chain runs to 517 residues: Crotonobetaine/carnitine--CoA ligase (517 aa).

The protein belongs to the ATP-dependent AMP-binding enzyme family.

The catalysed reaction is 4-(trimethylamino)butanoate + ATP + CoA = 4-(trimethylamino)butanoyl-CoA + AMP + diphosphate. It catalyses the reaction crotonobetaine + ATP + CoA = crotonobetainyl-CoA + AMP + diphosphate. It carries out the reaction (R)-carnitine + ATP + CoA = (R)-carnitinyl-CoA + AMP + diphosphate. It participates in amine and polyamine metabolism; carnitine metabolism. Its function is as follows. Catalyzes the transfer of CoA to carnitine, generating the initial carnitinyl-CoA needed for the CaiB reaction cycle. Also has activity toward crotonobetaine and gamma-butyrobetaine. This is Crotonobetaine/carnitine--CoA ligase from Escherichia coli (strain K12 / MC4100 / BW2952).